The following is a 384-amino-acid chain: Formate dehydrogenase, chloroplastic/mitochondrial (384 aa).

The transit peptide at 1–29 (MAMRQAAKATIRACSSSSSSGYFARRQFN) directs the protein to the chloroplast and mitochondrion. Ile-128 and Asn-152 together coordinate substrate. NAD(+)-binding positions include 207–208 (RI), Asp-227, 262–266 (PLTEK), Asn-288, Asp-314, and 338–341 (HTSG).

It belongs to the D-isomer specific 2-hydroxyacid dehydrogenase family. FDH subfamily. In terms of assembly, homodimer.

It is found in the mitochondrion. It localises to the plastid. Its subcellular location is the chloroplast. It catalyses the reaction formate + NAD(+) = CO2 + NADH. Catalyzes the NAD(+)-dependent oxidation of formate to carbon dioxide. Involved in the cell stress response. The sequence is that of Formate dehydrogenase, chloroplastic/mitochondrial (FDH1) from Arabidopsis thaliana (Mouse-ear cress).